The sequence spans 119 residues: uncharacterized protein (119 aa).

Residues 1–26 (MNKLKRLSMLTVMIASVFIFSSHALA) form the signal peptide. Residues 30 to 104 (YTVSTSSGAP…IVPGFVSDTY (75 aa)) form the SH3b domain.

It to B.subtilis YraJ.

This is an uncharacterized protein from Bacillus subtilis (strain 168).